Reading from the N-terminus, the 604-residue chain is Structure-specific endonuclease subunit MUS81 (604 aa).

Disordered regions lie at residues 93–138, 227–248, and 253–272; these read AAVH…REYV, KLDSEETGTRHEDVDSQDGQNV, and LEEEDEDEEKESWSSERPAV. 2 stretches are compositionally biased toward basic and acidic residues: residues 116-128 and 227-240; these read EHTKLTQKEVRKE and KLDSEETGTRHEDV. The tract at residues 138–254 is winged helix domain (WHD); critical for endonuclease activity; sequence VPQKRSGGYA…GQNVVDLTLE (117 aa). Residues 253–262 are compositionally biased toward acidic residues; sequence LEEEDEDEEK. One can recognise an ERCC4 domain in the interval 314 to 423; the sequence is VLCVDLCETT…KPIYLVEECG (110 aa). Active-site residues include Asp318, Glu321, and Asp353. Positions 318, 321, 353, 384, and 385 each coordinate Mg(2+). Residues 524–598 form a helix-hairpin-helix (2HhH); involved in DNA recognition and bending region; that stretch reads VREVFARQLM…LSRTIYQLYC (75 aa).

The protein belongs to the XPF family. In terms of assembly, part of the heterodimeric DNA structure-specific endonuclease complex MUS81-EME1. Part of the heterodimeric DNA structure-specific endonuclease complex MUS81-EME2. It depends on Mg(2+) as a cofactor.

The protein resides in the nucleus. It is found in the nucleolus. Functionally, catalytic subunit of two functionally distinct, structure-specific, heterodimeric DNA endonucleases MUS81-EME1 and MUS81-EME2 that are involved in the maintenance of genome stability. Both endonucleases have essentially the same substrate specificity though MUS81-EME2 is more active than its MUS81-EME1 counterpart. Both cleave 3'-flaps and nicked Holliday junctions, and exhibit limited endonuclease activity with 5' flaps and nicked double-stranded DNAs. MUS81-EME2 which is active during the replication of DNA is more specifically involved in replication fork processing. Replication forks frequently encounter obstacles to their passage, including DNA base lesions, DNA interstrand cross-links, difficult-to-replicate sequences, transcription bubbles, or tightly bound proteins. One mechanism for the restart of a stalled replication fork involves nucleolytic cleavage mediated by the MUS81-EME2 endonuclease. By acting upon the stalled fork, MUS81-EME2 generates a DNA double-strand break (DSB) that can be repaired by homologous recombination, leading to the restoration of an active fork. MUS81-EME2 could also function in telomere maintenance. MUS81-EME1, on the other hand, is active later in the cell cycle and functions in the resolution of mitotic recombination intermediates including the Holliday junctions, the four-way DNA intermediates that form during homologous recombination. The sequence is that of Structure-specific endonuclease subunit MUS81 (mus81) from Danio rerio (Zebrafish).